The sequence spans 91 residues: Large ribosomal subunit protein uL23 (91 aa).

The protein belongs to the universal ribosomal protein uL23 family. Part of the 50S ribosomal subunit. Contacts protein L29.

In terms of biological role, binds to 23S rRNA. One of the proteins that surrounds the polypeptide exit tunnel on the outside of the ribosome. The polypeptide is Large ribosomal subunit protein uL23 (Staphylothermus marinus (strain ATCC 43588 / DSM 3639 / JCM 9404 / F1)).